The sequence spans 685 residues: MNPATDPVSAAAAALAPPPQPPQPHRLSTSCNRHPEERFTGFCPSCLCERLSVLDQTNNGGSSSSSKKPPTISAAALKALFKPSGNNGVGGVNTNGNGRVKPGFFPELRRTKSFSASKNNEGFSGVFEPQRRSCDVRLRSSLWNLFSQDEQRNLPSNVTGGEIDVEPRKSSVAEPVLEVNDEGEAESDDEELEEEEEEDYVEAGDFEILNDSGELMREKSDEIVEVREEIEEAVKPTKGLSEEELKPIKDYIDLDSQTKKPSVRRSFWSAASVFSKKLQKWRQNQKMKKRRNGGDHRPGSARLPVEKPIGRQLRDTQSEIADYGYGRRSCDTDPRFSLDAGRFSLDAGRFSVDIGRISLDDPRYSFDEPRASWDGSLIGRTMFPPAARAPPPPSMLSVVEDAPPPVHRHVTRADMQFPVEEPAPPPPVVNQTNGVSDPVIIPGGSIQTRDYYTDSSSRRRKSLDRSSSSMRKTAAAVVADMDEPKLSVSSAISIDAYSGSLRDNNNYAVETADNGSFREPAMMIGDRKVNSNDNNKKSRRWGKWSILGLIYRKSVNKYEEEEEEEEDRYRRLNGGMVERSLSESWPELRNGGGGGGGPRMVRSNSNVSWRSSGGGSARKVNGLDRRNKSSRYSPKNGENGMLKFYLPHMKASRRMSGTGGAGGGGGGGWANSHGHSIARSVMRLY.

Disordered stretches follow at residues 1 to 34 (MNPATDPVSAAAAALAPPPQPPQPHRLSTSCNRH), 152 to 202 (RNLP…DYVE), and 280 to 314 (KWRQNQKMKKRRNGGDHRPGSARLPVEKPIGRQLR). Residues 179 to 202 (VNDEGEAESDDEELEEEEEEDYVE) are compositionally biased toward acidic residues. Basic residues predominate over residues 280-291 (KWRQNQKMKKRR). Over residues 292–314 (NGGDHRPGSARLPVEKPIGRQLR) the composition is skewed to basic and acidic residues. Residue Ser318 is modified to Phosphoserine. Residues 419 to 471 (VEEPAPPPPVVNQTNGVSDPVIIPGGSIQTRDYYTDSSSRRRKSLDRSSSSMR) form a disordered region. The stretch at 549 to 578 (LIYRKSVNKYEEEEEEEEDRYRRLNGGMVE) forms a coiled coil. A disordered region spans residues 584-640 (SWPELRNGGGGGGGPRMVRSNSNVSWRSSGGGSARKVNGLDRRNKSSRYSPKNGENG). Residues 601 to 611 (VRSNSNVSWRS) show a composition bias toward low complexity.

It belongs to the OCTOPUS family. Interacts with VCC. Phosphorylation at Ser-318 amplifies the promotion of protophloem differentiation. Expressed in provascular cells and phloem initials (e.g. protophloem, metaphloem, sieve element precursor cells and sieve element procambium precursor cells).

The protein resides in the cell membrane. The protein localises to the cytoplasm. Potentiates primary root protophloem differentiation. Required, together with VCC, for embryo provasculature development and cotyledon vascular complexity and connectivity. Regulates roots architecture. Mediates the recruitment of ASK7/BIN2 to the plasma membrane. In Arabidopsis thaliana (Mouse-ear cress), this protein is Protein OCTOPUS.